We begin with the raw amino-acid sequence, 509 residues long: Ribonuclease Y (509 aa).

Residues 5–25 (IIILLSVFCGIFFICFIICSS) form a helical membrane-spanning segment. The KH domain occupies 199 to 259 (TTNIVKLPSD…IRREIATRTL (61 aa)). Residues 325-418 (VLAHSIEVAK…VAIADSISAS (94 aa)) form the HD domain.

Belongs to the RNase Y family.

The protein resides in the cell membrane. In terms of biological role, endoribonuclease that initiates mRNA decay. The sequence is that of Ribonuclease Y from Mycoplasma mycoides subsp. mycoides SC (strain CCUG 32753 / NCTC 10114 / PG1).